The primary structure comprises 179 residues: DELTA-miturgitoxin-Cp2a (179 aa).

The signal sequence occupies residues 1–20; it reads MKFSLFFGVLFLAILHSCLS. Residues 21-47 constitute a propeptide that is removed on maturation; sequence ESEKDLTDEDHFRSSDSFLSEIQEESR. Residues 44–47 carry the Processing quadruplet motif motif; sequence EESR. 8 disulfide bridges follow: C51–C66, C58–C75, C65–C88, C77–C86, C115–C130, C122–C139, C129–C158, and C141–C156. At V178 the chain carries Valine amide.

It belongs to the spider toxin CSTX family. Double-CSTX subfamily. Post-translationally, cleavage of the propeptide depends on the processing quadruplet motif (XXXR, with at least one of X being E). As to expression, expressed by the venom gland.

It localises to the secreted. Functionally, spider venom toxin that exhibits cytolytic activity by forming an alpha-helix across the membrane. Lethal to insect larvae. This Cheiracanthium punctorium (Yellow sac spider) protein is DELTA-miturgitoxin-Cp2a.